The sequence spans 204 residues: Elongation factor Ts (204 aa).

The interval 87–90 (TDFV) is involved in Mg(2+) ion dislocation from EF-Tu.

Belongs to the EF-Ts family.

The protein resides in the cytoplasm. Functionally, associates with the EF-Tu.GDP complex and induces the exchange of GDP to GTP. It remains bound to the aminoacyl-tRNA.EF-Tu.GTP complex up to the GTP hydrolysis stage on the ribosome. In Frankia alni (strain DSM 45986 / CECT 9034 / ACN14a), this protein is Elongation factor Ts.